The chain runs to 118 residues: Large ribosomal subunit protein bL20 (118 aa).

This sequence belongs to the bacterial ribosomal protein bL20 family.

Binds directly to 23S ribosomal RNA and is necessary for the in vitro assembly process of the 50S ribosomal subunit. It is not involved in the protein synthesizing functions of that subunit. This chain is Large ribosomal subunit protein bL20, found in Pelagibacter ubique (strain HTCC1062).